A 726-amino-acid chain; its full sequence is Netrin-A (726 aa).

An N-terminal signal peptide occupies residues 1–29 (MIRGILLLLLGTTRFSPIQCISNDVYFKM). Positions 46-312 (EPRACIPDFV…AISDFSVGGR (267 aa)) constitute a Laminin N-terminal domain. Residues Asn-108, Asn-112, and Asn-127 are each glycosylated (N-linked (GlcNAc...) asparagine). 12 disulfides stabilise this stretch: Cys-313–Cys-322, Cys-315–Cys-332, Cys-334–Cys-343, Cys-346–Cys-366, Cys-369–Cys-378, Cys-371–Cys-396, Cys-399–Cys-408, Cys-411–Cys-429, Cys-432–Cys-444, Cys-434–Cys-451, Cys-453–Cys-462, and Cys-465–Cys-479. 3 Laminin EGF-like domains span residues 313 to 368 (CKCN…ECKE), 369 to 431 (CNCN…VCKA), and 432 to 481 (CDCH…PCIK). An N-linked (GlcNAc...) asparagine glycan is attached at Asn-445. A disordered region spans residues 490–516 (LDTQNTAPEPDEPESSPGSGGDRNGAA). 2 disulfides stabilise this stretch: Cys-533–Cys-671 and Cys-549–Cys-725. The NTR domain maps to 533–725 (CGKCRVSTKR…KRFQRRARTC (193 aa)). N-linked (GlcNAc...) asparagine glycans are attached at residues Asn-652 and Asn-679.

As to expression, at the midline of developing CNS at the time of commissure formation and in different subsets of neurons, muscles, and epidermal patches.

The protein localises to the secreted. It is found in the extracellular space. It localises to the extracellular matrix. In terms of biological role, netrins control guidance of CNS commissural axons at the midline and peripheral motor axons to their target muscles. This chain is Netrin-A (NetA), found in Drosophila melanogaster (Fruit fly).